The sequence spans 574 residues: Protein SIX6OS1 (574 aa).

Positions 259–313 are disordered; that stretch reads KDEQVSNRSSQNSQLLLPCESQKFVRNMNSSEARVTDKKEESSANQSKFVRSDVR. Low complexity predominate over residues 264-275; sequence SNRSSQNSQLLL. T427 is modified (phosphothreonine). Position 430 is a phosphoserine (S430). The disordered stretch occupies residues 549 to 574; the sequence is QDPSTMTSSSSKDFSSSQNKTQFMFF. The segment covering 552–565 has biased composition (low complexity); that stretch reads STMTSSSSKDFSSS.

Interacts with SYCE1. Interacts with proteasome subunit PSMA8; to participate in meiosis progression during spermatogenesis. Most abundantly expressed in testis. Also expressed in retina and skeletal muscle.

It localises to the chromosome. Its function is as follows. Meiotic protein that localizes to the central element of the synaptonemal complex and is required for chromosome synapsis during meiotic recombination. Required for the appropriate processing of intermediate recombination nodules before crossover formation. This chain is Protein SIX6OS1 (Six6os1), found in Mus musculus (Mouse).